Here is a 137-residue protein sequence, read N- to C-terminus: Small ribosomal subunit protein uS12 (137 aa).

Residues 1–44 form a disordered region; the sequence is MPTINQLVRKGRKSRTSKSDAPALNFGYNSMKKKATDNPAPQKR. Asp102 carries the post-translational modification 3-methylthioaspartic acid.

It belongs to the universal ribosomal protein uS12 family. In terms of assembly, part of the 30S ribosomal subunit. Contacts proteins S8 and S17. May interact with IF1 in the 30S initiation complex.

Its function is as follows. With S4 and S5 plays an important role in translational accuracy. In terms of biological role, interacts with and stabilizes bases of the 16S rRNA that are involved in tRNA selection in the A site and with the mRNA backbone. Located at the interface of the 30S and 50S subunits, it traverses the body of the 30S subunit contacting proteins on the other side and probably holding the rRNA structure together. The combined cluster of proteins S8, S12 and S17 appears to hold together the shoulder and platform of the 30S subunit. In Latilactobacillus sakei subsp. sakei (strain 23K) (Lactobacillus sakei subsp. sakei), this protein is Small ribosomal subunit protein uS12.